We begin with the raw amino-acid sequence, 335 residues long: 2-keto-3-deoxygluconate permease (335 aa).

Helical transmembrane passes span 10 to 30 (IPGGLMLVPLLLGAILHTAAP), 42 to 62 (GIITGTLPILSVWFFCIGASI), 77 to 97 (LVLTKIAVAWVVALIAAQLLP), 100 to 120 (GIEVGMLAGLSTLALVSAMDM), 141 to 161 (AFVLMSVESGPLMTMVILGSA), 163 to 183 (LASFQPHHFVGAVLPFLIGFA), 200 to 220 (QTLIPFFGFALGNTINLGVIL), 224 to 244 (LLGIAMGLLVIVVTGIPLIIA), 254 to 274 (TAGLAASSTAGAAVANPVIIA), and 289 to 309 (ALVATCVIVTSILVPILTAMY).

Belongs to the KdgT transporter family.

It localises to the cell inner membrane. The enzyme catalyses 2-dehydro-3-deoxy-D-gluconate(in) + H(+)(in) = 2-dehydro-3-deoxy-D-gluconate(out) + H(+)(out). In terms of biological role, catalyzes the proton-dependent uptake of 2-keto-3-deoxygluconate (KDG) into the cell. The sequence is that of 2-keto-3-deoxygluconate permease from Tolumonas auensis (strain DSM 9187 / NBRC 110442 / TA 4).